The following is a 483-amino-acid chain: Cobyric acid synthase (483 aa).

Residues 244-430 form the GATase cobBQ-type domain; it reads WLRVIAPVLP…LHGLFDHAEA (187 aa). Cysteine 325 functions as the Nucleophile in the catalytic mechanism. The active site involves histidine 422.

It belongs to the CobB/CobQ family. CobQ subfamily.

It participates in cofactor biosynthesis; adenosylcobalamin biosynthesis. Catalyzes amidations at positions B, D, E, and G on adenosylcobyrinic A,C-diamide. NH(2) groups are provided by glutamine, and one molecule of ATP is hydrogenolyzed for each amidation. This chain is Cobyric acid synthase, found in Methylobacillus flagellatus (strain ATCC 51484 / DSM 6875 / VKM B-1610 / KT).